The following is a 325-amino-acid chain: 5-dehydro-2-deoxygluconokinase (325 aa).

Belongs to the carbohydrate kinase PfkB family.

It catalyses the reaction 5-dehydro-2-deoxy-D-gluconate + ATP = 6-phospho-5-dehydro-2-deoxy-D-gluconate + ADP + H(+). It participates in polyol metabolism; myo-inositol degradation into acetyl-CoA; acetyl-CoA from myo-inositol: step 5/7. Functionally, catalyzes the phosphorylation of 5-dehydro-2-deoxy-D-gluconate (2-deoxy-5-keto-D-gluconate or DKG) to 6-phospho-5-dehydro-2-deoxy-D-gluconate (DKGP). The sequence is that of 5-dehydro-2-deoxygluconokinase (iolC) from Bacillus subtilis (strain 168).